A 336-amino-acid polypeptide reads, in one-letter code: Nitrilase (336 aa).

Positions 5-278 (LKVACVQAAP…EGLLYATLDP (274 aa)) constitute a CN hydrolase domain. Residue Glu45 is the Proton acceptor of the active site. Lys127 serves as the catalytic Proton donor. Cys161 functions as the Nucleophile in the catalytic mechanism.

This sequence belongs to the carbon-nitrogen hydrolase superfamily. Nitrilase family.

The enzyme catalyses a nitrile + 2 H2O = a carboxylate + NH4(+). The catalysed reaction is (indol-3-yl)acetonitrile + 2 H2O = (indol-3-yl)acetate + NH4(+). It carries out the reaction phenylpropanonitrile + 2 H2O = 3-phenylpropanoate + NH4(+). Arylacetonitrilase which is capable of hydrolyzing indole-3-acetonitrile (IAN) to the plant hormone indole-3-acetate (IAA), and allows the plant pathogenic bacterium to use IAN as a sole nitrogen source. Is also able to hydrolyze phenylpropionitrile (PPN), allowing the use of this compound as a sole nitrogen source. This enzyme may represent an additional mechanism for IAA biosynthesis or may be used to degrade and assimilate aldoximes and nitriles produced during host plant secondary metabolism. The chain is Nitrilase from Pseudomonas syringae pv. syringae (strain B728a).